Consider the following 357-residue polypeptide: Protein XRP2 (357 aa).

Over residues 1–11 the composition is skewed to basic residues; sequence MGCFFSKRRKP. Residues 1–39 are disordered; it reads MGCFFSKRRKPAQGGQQQGASQEPAAGEEKAPQYSWDQR. The N-myristoyl glycine moiety is linked to residue Gly2. A lipid anchor (S-palmitoyl cysteine) is attached at Cys3. The span at 12–25 shows a compositional bias: low complexity; the sequence is AQGGQQQGASQEPA. Residues 32 to 186 enclose the C-CAP/cofactor C-like domain; that stretch reads PQYSWDQRAK…TWSNIHDFTP (155 aa). GTP-binding positions include 105-106 and 122-125; these read GS and QQFR.

It belongs to the TBCC family. Myristoylated on Gly-2; which may be required for membrane targeting. In terms of processing, palmitoylated on Cys-3; which may be required for plasma membrane targeting.

The protein resides in the cell membrane. Functionally, acts as a GTPase-activating protein (GAP) for tubulin in concert with tubulin-specific chaperone C, but does not enhance tubulin heterodimerization. Acts as a GTPase-activating protein. May act as guanine nucleotide dissociation inhibitor towards ADP-ribosylation factor-like proteins. In Gallus gallus (Chicken), this protein is Protein XRP2 (RP2).